Here is a 399-residue protein sequence, read N- to C-terminus: S-adenosylmethionine synthase (399 aa).

His-15 lines the ATP pocket. Asp-17 contacts Mg(2+). Glu-43 lines the K(+) pocket. Residues Glu-56 and Gln-99 each contribute to the L-methionine site. Positions 99-109 (QSPDIARGVNR) are flexible loop. ATP is bound by residues 166 to 168 (DAK), 232 to 233 (RF), Asp-241, 247 to 248 (RK), Ala-264, and Lys-268. Position 241 (Asp-241) interacts with L-methionine. An L-methionine-binding site is contributed by Lys-272.

This sequence belongs to the AdoMet synthase family. Homotetramer; dimer of dimers. It depends on Mg(2+) as a cofactor. K(+) serves as cofactor.

It localises to the cytoplasm. The enzyme catalyses L-methionine + ATP + H2O = S-adenosyl-L-methionine + phosphate + diphosphate. It participates in amino-acid biosynthesis; S-adenosyl-L-methionine biosynthesis; S-adenosyl-L-methionine from L-methionine: step 1/1. Catalyzes the formation of S-adenosylmethionine (AdoMet) from methionine and ATP. The overall synthetic reaction is composed of two sequential steps, AdoMet formation and the subsequent tripolyphosphate hydrolysis which occurs prior to release of AdoMet from the enzyme. The protein is S-adenosylmethionine synthase of Nitrosospira multiformis (strain ATCC 25196 / NCIMB 11849 / C 71).